A 240-amino-acid polypeptide reads, in one-letter code: Ribonuclease 3 (240 aa).

One can recognise an RNase III domain in the interval Val-9–Gly-141. Glu-54 lines the Mg(2+) pocket. The active site involves Asp-58. Residues Asp-127 and Glu-130 each coordinate Mg(2+). Residue Glu-130 is part of the active site. A DRBM domain is found at Asp-168–Lys-237.

The protein belongs to the ribonuclease III family. As to quaternary structure, homodimer. The cofactor is Mg(2+).

Its subcellular location is the cytoplasm. The enzyme catalyses Endonucleolytic cleavage to 5'-phosphomonoester.. Its function is as follows. Digests double-stranded RNA. Involved in the processing of primary rRNA transcript to yield the immediate precursors to the large and small rRNAs (23S and 16S). Processes some mRNAs, and tRNAs when they are encoded in the rRNA operon. Processes pre-crRNA and tracrRNA of type II CRISPR loci if present in the organism. In Thermotoga petrophila (strain ATCC BAA-488 / DSM 13995 / JCM 10881 / RKU-1), this protein is Ribonuclease 3.